Consider the following 229-residue polypeptide: tRNA (guanine-N(1)-)-methyltransferase (229 aa).

Residues Gly109 and 129–134 (IGDFIL) each bind S-adenosyl-L-methionine.

Belongs to the RNA methyltransferase TrmD family. In terms of assembly, homodimer.

It localises to the cytoplasm. The catalysed reaction is guanosine(37) in tRNA + S-adenosyl-L-methionine = N(1)-methylguanosine(37) in tRNA + S-adenosyl-L-homocysteine + H(+). Its function is as follows. Specifically methylates guanosine-37 in various tRNAs. This is tRNA (guanine-N(1)-)-methyltransferase from Helicobacter pylori (strain Shi470).